Reading from the N-terminus, the 292-residue chain is Probable 2-(5''-triphosphoribosyl)-3'-dephosphocoenzyme-A synthase (292 aa).

The protein belongs to the CitG/MdcB family.

It catalyses the reaction 3'-dephospho-CoA + ATP = 2'-(5''-triphospho-alpha-D-ribosyl)-3'-dephospho-CoA + adenine. The chain is Probable 2-(5''-triphosphoribosyl)-3'-dephosphocoenzyme-A synthase from Shigella sonnei (strain Ss046).